Reading from the N-terminus, the 335-residue chain is ATP-dependent 6-phosphofructokinase (335 aa).

Residue glycine 11 coordinates ATP. 21-25 (RAVVR) serves as a coordination point for ADP. Residues 72 to 73 (RY) and 102 to 105 (GDGS) contribute to the ATP site. Position 103 (aspartate 103) interacts with Mg(2+). 125–127 (TID) contributes to the substrate binding site. Aspartate 127 acts as the Proton acceptor in catalysis. Position 154 (arginine 154) interacts with ADP. Residues arginine 162 and 169–171 (MGR) contribute to the substrate site. Residues 185–187 (GAD) and 213–215 (KKH) each bind ADP. Substrate-binding positions include glutamate 222, arginine 244, and 250-253 (HIQR).

Belongs to the phosphofructokinase type A (PFKA) family. ATP-dependent PFK group I subfamily. Prokaryotic clade 'B1' sub-subfamily. Homotetramer. Mg(2+) serves as cofactor.

It localises to the cytoplasm. It catalyses the reaction beta-D-fructose 6-phosphate + ATP = beta-D-fructose 1,6-bisphosphate + ADP + H(+). The protein operates within carbohydrate degradation; glycolysis; D-glyceraldehyde 3-phosphate and glycerone phosphate from D-glucose: step 3/4. With respect to regulation, allosterically activated by ADP and other diphosphonucleosides, and allosterically inhibited by phosphoenolpyruvate. Functionally, catalyzes the phosphorylation of D-fructose 6-phosphate to fructose 1,6-bisphosphate by ATP, the first committing step of glycolysis. The sequence is that of ATP-dependent 6-phosphofructokinase from Streptococcus pneumoniae (strain CGSP14).